A 70-amino-acid polypeptide reads, in one-letter code: uncharacterized protein (70 aa).

It is found in the plastid. Its subcellular location is the chloroplast. This is an uncharacterized protein from Mesostigma viride (Green alga).